Reading from the N-terminus, the 56-residue chain is Preprotein translocase subunit SecG (56 aa).

Residues 1-29 lie on the Cytoplasmic side of the membrane; the sequence is MAKEKATLPPTGAGLMRFFDEDTKAVKIS. Residues 30–51 traverse the membrane as a helical segment; it reads PRGVIALTLILVALEILLHAFG. The Extracellular segment spans residues 52–56; it reads PQIFG.

It belongs to the SEC61-beta family. In terms of assembly, component of the protein translocase complex. Heterotrimer consisting of alpha (SecY), beta (SecG) and gamma (SecE) subunits. Can form oligomers of the heterotrimer.

It is found in the cell membrane. Functionally, involved in protein export. The function of the beta subunit is unknown, but it may be involved in stabilization of the trimeric complex. This is Preprotein translocase subunit SecG from Thermococcus onnurineus (strain NA1).